The primary structure comprises 620 residues: Sodium-dependent dopamine transporter (620 aa).

The Cytoplasmic portion of the chain corresponds to 1–56 (MSKSKCSVGLMSSVVAPAKEPNAMGPKEVELILVKEQNGVQLTSSTLTNPRQSPVE). A discontinuously helical membrane pass occupies residues 57-95 (AQDRETWGKKIDFLLSVIGFAVDLANVWRFPYLCYKNGG). Positions 75, 77, 78, 79, and 82 each coordinate Na(+). Dopamine is bound at residue Asp-79. A run of 2 helical transmembrane segments spans residues 96-127 (GAFL…NREG) and 128-171 (AAGV…FSSF). Positions 149 and 153 each coordinate dopamine. At 172–236 (TTELPWIHCN…SHGIDDLGPP (65 aa)) the chain is on the extracellular side. Cysteines 180 and 189 form a disulfide. Asn-181, Asn-188, and Asn-205 each carry an N-linked (GlcNAc...) asparagine glycan. 2 consecutive transmembrane segments (helical) span residues 237-256 (RWQL…FSLW) and 257-287 (KGVK…GVTL). Over 288–306 (PGAIDGIRAYLSVDFYRLC) the chain is Extracellular. The chain crosses the membrane as a discontinuously helical span at residues 307–335 (EASVWIDAATQVCFSLGVGFGVLIAFSSY). Residue Gln-317 coordinates chloride. Phe-320 is a dopamine binding site. Residues Ser-321 and Asn-353 each contribute to the Na(+) site. Residue Ser-321 participates in chloride binding. A helical transmembrane segment spans residues 336 to 376 (NKFTNNCYRDAIVTTSINSLTSFSSGFVVFSFLGYMAQKHS). Position 357 (Ser-357) interacts with chloride. The Extracellular portion of the chain corresponds to 377-400 (VPIGDVAKDGPGLIFIIYPEAIAT). The next 3 helical transmembrane spans lie at 401–442 (LPLS…QLLH), 443–466 (RHRE…CVTN), and 467–499 (GGIY…AWFY). Na(+) is bound by residues Leu-418, Asp-421, and Ser-422. Residues Ser-422 and Ala-423 each contribute to the dopamine site. At 500–516 (GVGQFSDDIQQMTGQRP) the chain is on the cytoplasmic side. Residues 517–542 (SLYWRLCWKLVSPCFLLFVVVVSIVT) form a helical membrane-spanning segment. The Extracellular portion of the chain corresponds to 543–553 (FRPPHYGAYIF). Residues 554–583 (PDWANALGWVIATSSMAMVPIYAAYKFCSL) traverse the membrane as a helical segment. The interval 561 to 590 (GWVIATSSMAMVPIYAAYKFCSLPGSFREK) is interaction with TGFB1I1. Topologically, residues 584–620 (PGSFREKLAYAIAPEKDRELVDRGEVRQFTLRHWLKV) are cytoplasmic.

This sequence belongs to the sodium:neurotransmitter symporter (SNF) (TC 2.A.22) family. SLC6A3 subfamily. As to quaternary structure, monomer. Homooligomer; disulfide-linked. Interacts with PRKCABP and TGFB1I1. Interacts (via N-terminus) with SYNGR3 (via N-terminus). Interacts with SLC18A2. Interacts with TOR1A (ATP-bound); TOR1A regulates SLC6A3 subcellular location. Interacts with alpha-synuclein/SNCA. Interacts with SEPTIN4.

The protein localises to the cell membrane. It is found in the cell projection. It localises to the neuron projection. The protein resides in the axon. The enzyme catalyses dopamine(out) + chloride(out) + Na(+)(out) = dopamine(in) + chloride(in) + Na(+)(in). The catalysed reaction is (R)-noradrenaline(out) + chloride(out) + Na(+)(out) = (R)-noradrenaline(in) + chloride(in) + Na(+)(in). It catalyses the reaction dopamine(out) + chloride(out) + 2 Na(+)(out) = dopamine(in) + chloride(in) + 2 Na(+)(in). Inhibited by zinc ions. Functionally, mediates sodium- and chloride-dependent transport of dopamine. Also mediates sodium- and chloride-dependent transport of norepinephrine (also known as noradrenaline). Regulator of light-dependent retinal hyaloid vessel regression, downstream of OPN5 signaling. The sequence is that of Sodium-dependent dopamine transporter (SLC6A3) from Macaca fascicularis (Crab-eating macaque).